The following is a 380-amino-acid chain: Putative 8-amino-7-oxononanoate synthase (380 aa).

Arg18 lines the substrate pocket. 106-107 provides a ligand contact to pyridoxal 5'-phosphate; that stretch reads GY. Position 131 (His131) interacts with substrate. Residues Ser179, 205–208, and 236–239 each bind pyridoxal 5'-phosphate; these read DEAH and TFGK. Position 239 is an N6-(pyridoxal phosphate)lysine (Lys239). Thr352 provides a ligand contact to substrate.

This sequence belongs to the class-II pyridoxal-phosphate-dependent aminotransferase family. BioF subfamily. Homodimer. The cofactor is pyridoxal 5'-phosphate.

It catalyses the reaction 6-carboxyhexanoyl-[ACP] + L-alanine + H(+) = (8S)-8-amino-7-oxononanoate + holo-[ACP] + CO2. It participates in cofactor biosynthesis; biotin biosynthesis. Functionally, catalyzes the decarboxylative condensation of pimeloyl-[acyl-carrier protein] and L-alanine to produce 8-amino-7-oxononanoate (AON), [acyl-carrier protein], and carbon dioxide. This chain is Putative 8-amino-7-oxononanoate synthase (bioF), found in Neisseria gonorrhoeae (strain ATCC 700825 / FA 1090).